The sequence spans 149 residues: D-aminoacyl-tRNA deacylase (149 aa).

Residues 138–139 carry the Gly-cisPro motif, important for rejection of L-amino acids motif; sequence GP.

This sequence belongs to the DTD family. As to quaternary structure, homodimer.

The protein localises to the cytoplasm. It carries out the reaction glycyl-tRNA(Ala) + H2O = tRNA(Ala) + glycine + H(+). The enzyme catalyses a D-aminoacyl-tRNA + H2O = a tRNA + a D-alpha-amino acid + H(+). Its function is as follows. An aminoacyl-tRNA editing enzyme that deacylates mischarged D-aminoacyl-tRNAs. Also deacylates mischarged glycyl-tRNA(Ala), protecting cells against glycine mischarging by AlaRS. Acts via tRNA-based rather than protein-based catalysis; rejects L-amino acids rather than detecting D-amino acids in the active site. By recycling D-aminoacyl-tRNA to D-amino acids and free tRNA molecules, this enzyme counteracts the toxicity associated with the formation of D-aminoacyl-tRNA entities in vivo and helps enforce protein L-homochirality. This is D-aminoacyl-tRNA deacylase from Chlorobaculum parvum (strain DSM 263 / NCIMB 8327) (Chlorobium vibrioforme subsp. thiosulfatophilum).